Consider the following 358-residue polypeptide: Trans-enoyl reductase pvhC (358 aa).

48–51 (VDSK) serves as a coordination point for NADP(+). 134-141 (ISFLTSGL) contacts substrate. Residues 169-172 (SSSC), 192-195 (SPHN), tyrosine 210, and 257-258 (LE) contribute to the NADP(+) site. Residue 278 to 282 (GPSLL) coordinates substrate. An NADP(+)-binding site is contributed by 347 to 348 (VS).

This sequence belongs to the zinc-containing alcohol dehydrogenase family. In terms of assembly, monomer.

Its pathway is secondary metabolite biosynthesis. In terms of biological role, trans-enoyl reductase; part of the gene cluster that mediates the biosynthesis of varicidin A, an antifungal natural product containing a cis-octahydrodecalin core. The PKS module of pvhA together with the enoylreductase pvhC catalyze the formation of the polyketide unit which is then conjugated to L-isoleucine by the condensation domain of the NRPS module. Activity of the Dieckmann cyclase domain (RED) of pvhA results in release of an acyclic tetramate. The cytochrome P450 monooxygenase pvhE then catalyzes the oxidation of the C21 methyl group to a to carboxylate group. The methyltransferase pvhD then further methylates the pvhE product. The Diels-Alderase pvhB is able to catalyze Diels-Alder cycloaddition using both pvhE and pvhD products as substrates to form the decalin ring, yielding varicidin B and A, respectively. The polypeptide is Trans-enoyl reductase pvhC (Talaromyces variabilis (Penicillium variabile)).